Reading from the N-terminus, the 416-residue chain is Multifunctional CCA protein (416 aa).

Residues Gly-8 and Arg-11 each contribute to the ATP site. CTP is bound by residues Gly-8 and Arg-11. Mg(2+) is bound by residues Glu-21 and Asp-23. Residues Arg-91, Arg-137, and Arg-140 each coordinate ATP. CTP is bound by residues Arg-91, Arg-137, and Arg-140. The 102-residue stretch at Thr-228 to Trp-329 folds into the HD domain.

The protein belongs to the tRNA nucleotidyltransferase/poly(A) polymerase family. Bacterial CCA-adding enzyme type 1 subfamily. In terms of assembly, monomer. Can also form homodimers and oligomers. Mg(2+) serves as cofactor. Requires Ni(2+) as cofactor.

It carries out the reaction a tRNA precursor + 2 CTP + ATP = a tRNA with a 3' CCA end + 3 diphosphate. The catalysed reaction is a tRNA with a 3' CCA end + 2 CTP + ATP = a tRNA with a 3' CCACCA end + 3 diphosphate. In terms of biological role, catalyzes the addition and repair of the essential 3'-terminal CCA sequence in tRNAs without using a nucleic acid template. Adds these three nucleotides in the order of C, C, and A to the tRNA nucleotide-73, using CTP and ATP as substrates and producing inorganic pyrophosphate. tRNA 3'-terminal CCA addition is required both for tRNA processing and repair. Also involved in tRNA surveillance by mediating tandem CCA addition to generate a CCACCA at the 3' terminus of unstable tRNAs. While stable tRNAs receive only 3'-terminal CCA, unstable tRNAs are marked with CCACCA and rapidly degraded. The polypeptide is Multifunctional CCA protein (Photorhabdus laumondii subsp. laumondii (strain DSM 15139 / CIP 105565 / TT01) (Photorhabdus luminescens subsp. laumondii)).